The chain runs to 79 residues: Morintide mO2 (79 aa).

A signal peptide spans 1–20 (MAKLSFLSLFLLCLVATATA). One can recognise a Chitin-binding type-1 domain in the interval 21-63 (QNCGRQAGNRACANGLCCSQYGFCGSTSEYCSRANGCQSNCRG). Cystine bridges form between Cys-23/Cys-38, Cys-32/Cys-44, Cys-37/Cys-51, and Cys-57/Cys-61. A propeptide spanning residues 64 to 79 (GGGAGGAGGGAGGGSP) is cleaved from the precursor.

Leaves (at protein level).

Chitin-binding protein which functions in defense against chitin-containing fungal pathogens. The sequence is that of Morintide mO2 from Moringa oleifera (Horseradish tree).